We begin with the raw amino-acid sequence, 333 residues long: Ketol-acid reductoisomerase (NADP(+)) (333 aa).

One can recognise a KARI N-terminal Rossmann domain in the interval 1–179 (MFYDDNADLS…GGTRAGVIKT (179 aa)). NADP(+) contacts are provided by residues 22–25 (YGSQ), Ser48, Ser50, and 80–83 (DTAQ). The active site involves His105. Gly131 is a binding site for NADP(+). The KARI C-terminal knotted domain maps to 180–325 (TFKDETETDL…KKLRDLMSWV (146 aa)). Mg(2+)-binding residues include Asp188, Glu192, Glu224, and Glu228. Position 249 (Ser249) interacts with substrate.

The protein belongs to the ketol-acid reductoisomerase family. Mg(2+) serves as cofactor.

The catalysed reaction is (2R)-2,3-dihydroxy-3-methylbutanoate + NADP(+) = (2S)-2-acetolactate + NADPH + H(+). It carries out the reaction (2R,3R)-2,3-dihydroxy-3-methylpentanoate + NADP(+) = (S)-2-ethyl-2-hydroxy-3-oxobutanoate + NADPH + H(+). It functions in the pathway amino-acid biosynthesis; L-isoleucine biosynthesis; L-isoleucine from 2-oxobutanoate: step 2/4. It participates in amino-acid biosynthesis; L-valine biosynthesis; L-valine from pyruvate: step 2/4. Functionally, involved in the biosynthesis of branched-chain amino acids (BCAA). Catalyzes an alkyl-migration followed by a ketol-acid reduction of (S)-2-acetolactate (S2AL) to yield (R)-2,3-dihydroxy-isovalerate. In the isomerase reaction, S2AL is rearranged via a Mg-dependent methyl migration to produce 3-hydroxy-3-methyl-2-ketobutyrate (HMKB). In the reductase reaction, this 2-ketoacid undergoes a metal-dependent reduction by NADPH to yield (R)-2,3-dihydroxy-isovalerate. The polypeptide is Ketol-acid reductoisomerase (NADP(+)) (Mycobacterium leprae (strain TN)).